Reading from the N-terminus, the 851-residue chain is M-phase phosphoprotein 8 (851 aa).

Residues 21-54 form a disordered region; the sequence is NIGRSPEVEGGGAAGEEKDAATKGTVAVGDSEED. Phosphoserine is present on residues S51, S85, and S136. The region spanning 59 to 118 is the Chromo domain; that stretch reads FEVERILDMKCEGGKNLYKVRWKGYTSDDDTWEPEVHLEDCKEVLLEFRKKVAENKAKAV. Residues 80-87 are histone H3K9me3 binding; it reads WKGYTSDD. A disordered region spans residues 133–174; sequence EADSDIDQQGDTKEDTSPRKKKKKIKYKEDKSPDDLRKKRAK. A Phosphothreonine modification is found at T144. Phosphoserine; by CDK1 occurs at positions 149 and 164. Residues 159–169 show a composition bias toward basic and acidic residues; sequence YKEDKSPDDLR. 4 positions are modified to phosphoserine: S188, S263, S267, and S274. Residues 240-302 form a disordered region; it reads REDVKDNRKT…KTGQDTVQES (63 aa). Acidic residues predominate over residues 269 to 278; that stretch reads TLEDESEDFL. Residues 279–295 show a composition bias toward basic and acidic residues; it reads SDNKEKQNVRTAKDKTG. At S313 the chain carries Phosphoserine. The tract at residues 315–428 is disordered; that stretch reads EEAGTRVRRK…DKEEKARKEP (114 aa). Positions 329–364 are enriched in basic and acidic residues; it reads RKFEEPKEIKKLENTNNFLERKMIPKKQRNQDKGRS. The residue at position 379 (T379) is a Phosphothreonine; by CDK1. Phosphoserine occurs at positions 386 and 394. The segment covering 401-428 has biased composition (basic and acidic residues); it reads EKERKNEPKEKYQKRYDFDKEEKARKEP. The residue at position 447 (T447) is a Phosphothreonine. ANK repeat units lie at residues 591-620, 624-653, 657-686, and 690-719; these read TGMT…KVNG, NGTT…FVNV, NGET…DCNI, and HQNS…TLSR.

As to quaternary structure, homodimer. Interacts (via chromo domain) with histone H3K9me3. Has the highest affinity for H3K9me3, and lesser affinity for H3K9me2 and H3K9me1. Component of the HUSH complex; at least composed of TASOR, PPHLN1 and MPHOSPH8. Interacts with DNMT3, EHMT1 and SETDB1. Interacts with MORC2; the interaction associateS MORC2 with the HUSH complex which recruits MORC2 to heterochromatic loci. Interacts with ZNF638; leading to recruitment of the HUSH complex to unintegrated retroviral DNA. Interacts with TASOR. Post-translationally, phosphorylated in M (mitotic) phase. Phosphorylation by CDK1 promotes dissociation from chromatin.

It localises to the nucleus. The protein resides in the chromosome. Functionally, heterochromatin component that specifically recognizes and binds methylated 'Lys-9' of histone H3 (H3K9me) and promotes recruitment of proteins that mediate epigenetic repression. Mediates recruitment of the HUSH complex to H3K9me3 sites: the HUSH complex is recruited to genomic loci rich in H3K9me3 and is required to maintain transcriptional silencing by promoting recruitment of SETDB1, a histone methyltransferase that mediates further deposition of H3K9me3, as well as MORC2. Binds H3K9me and promotes DNA methylation by recruiting DNMT3A to target CpG sites; these can be situated within the coding region of the gene. Mediates down-regulation of CDH1 expression. Also represses L1 retrotransposons in collaboration with MORC2 and, probably, SETDB1, the silencing is dependent of repressive epigenetic modifications, such as H3K9me3 mark. Silencing events often occur within introns of transcriptionally active genes, and lead to the down-regulation of host gene expression. The HUSH complex is also involved in the silencing of unintegrated retroviral DNA by being recruited by ZNF638: some part of the retroviral DNA formed immediately after infection remains unintegrated in the host genome and is transcriptionally repressed. In Rattus norvegicus (Rat), this protein is M-phase phosphoprotein 8.